The sequence spans 450 residues: Enolase (450 aa).

Gln167 is a (2R)-2-phosphoglycerate binding site. Glu209 serves as the catalytic Proton donor. Residues Asp250, Glu307, and Asp334 each contribute to the Mg(2+) site. 4 residues coordinate (2R)-2-phosphoglycerate: Lys359, Arg388, Ser389, and Lys410. Residue Lys359 is the Proton acceptor of the active site.

Belongs to the enolase family. It depends on Mg(2+) as a cofactor.

The protein resides in the cytoplasm. The protein localises to the secreted. Its subcellular location is the cell surface. It carries out the reaction (2R)-2-phosphoglycerate = phosphoenolpyruvate + H2O. It functions in the pathway carbohydrate degradation; glycolysis; pyruvate from D-glyceraldehyde 3-phosphate: step 4/5. Its function is as follows. Catalyzes the reversible conversion of 2-phosphoglycerate (2-PG) into phosphoenolpyruvate (PEP). It is essential for the degradation of carbohydrates via glycolysis. Functionally, 'Moonlights' as a plasminogen receptor and plasmin activator. Contributes to host (pig) cell adhesion; anti-enolase antibodies decrease binding to porcine kidney cells about 60%. Binds host plasminogen and fibronectin in vitro; enhances the activity of host tissue-specific plasminogen activator (tPA), and helps plasminogen and tPA degrade articifial host extracellular matrices. This chain is Enolase, found in Mesomycoplasma hyorhinis (strain HUB-1) (Mycoplasma hyorhinis).